Reading from the N-terminus, the 246-residue chain is Adenosylcobinamide-GDP ribazoletransferase (246 aa).

The next 6 membrane-spanning stretches (helical) occupy residues 34-54 (IVTFPLVGLLLGAIAGAVALL), 59-79 (CGVPLAALFGVLALALLTGGF), 113-133 (GGLALIFVLVAKVLVVGELLL), 136-156 (IHPIAALAAACAVGRGMAALL), 181-201 (TLVTMAMAIALATALLGLQGL), and 203-223 (AALITLVLIWGLGWALKRTLG).

This sequence belongs to the CobS family. It depends on Mg(2+) as a cofactor.

It is found in the cell inner membrane. It catalyses the reaction alpha-ribazole + adenosylcob(III)inamide-GDP = adenosylcob(III)alamin + GMP + H(+). It carries out the reaction alpha-ribazole 5'-phosphate + adenosylcob(III)inamide-GDP = adenosylcob(III)alamin 5'-phosphate + GMP + H(+). It participates in cofactor biosynthesis; adenosylcobalamin biosynthesis; adenosylcobalamin from cob(II)yrinate a,c-diamide: step 7/7. Joins adenosylcobinamide-GDP and alpha-ribazole to generate adenosylcobalamin (Ado-cobalamin). Also synthesizes adenosylcobalamin 5'-phosphate from adenosylcobinamide-GDP and alpha-ribazole 5'-phosphate. This is Adenosylcobinamide-GDP ribazoletransferase from Klebsiella pneumoniae subsp. pneumoniae (strain ATCC 700721 / MGH 78578).